The chain runs to 372 residues: Hydrogenase-1 small chain (372 aa).

A signal peptide (tat-type signal) is located at residues 1 to 45 (MNNEETFYQAMRRQGVTRRSFLKYCSLAATSLGLGAGMAPKIAWA). Residues 46 to 325 (LENKPRIPVV…PQMGTHSTAD (280 aa)) are Periplasmic-facing. The [4Fe-4S] cluster site is built by Cys-62, Cys-65, Cys-160, Cys-194, His-232, Cys-235, Cys-260, and Cys-266. Residues Cys-275, Cys-294, and Cys-297 each contribute to the [3Fe-4S] cluster site. A helical transmembrane segment spans residues 326–346 (TVGLTALGVVAAAVGVHAVAS). The segment at 346-372 (SSVDQRRRHNQQPTETEHQPGNEDKQA) is disordered. At 347–372 (SVDQRRRHNQQPTETEHQPGNEDKQA) the chain is on the cytoplasmic side. The span at 360–372 (ETEHQPGNEDKQA) shows a compositional bias: basic and acidic residues.

This sequence belongs to the [NiFe]/[NiFeSe] hydrogenase small subunit family. As to quaternary structure, heterodimer of a large and a small subunit. [4Fe-4S] cluster serves as cofactor. The cofactor is [3Fe-4S] cluster. In terms of processing, predicted to be exported by the Tat system. The position of the signal peptide cleavage has not been experimentally proven.

It is found in the cell inner membrane. The enzyme catalyses H2 + A = AH2. Functionally, this is one of three S.flexneri hydrogenases synthesized in response to different physiological conditions. HYD1 is believed to have a role in hydrogen cycling during fermentative growth. This Shigella flexneri protein is Hydrogenase-1 small chain (hyaA).